A 368-amino-acid polypeptide reads, in one-letter code: Alanine racemase (368 aa).

Lys-40 acts as the Proton acceptor; specific for D-alanine in catalysis. Lys-40 bears the N6-(pyridoxal phosphate)lysine mark. Arg-136 contributes to the substrate binding site. Tyr-263 serves as the catalytic Proton acceptor; specific for L-alanine. Met-310 contributes to the substrate binding site.

The protein belongs to the alanine racemase family. Pyridoxal 5'-phosphate serves as cofactor.

The enzyme catalyses L-alanine = D-alanine. The protein operates within amino-acid biosynthesis; D-alanine biosynthesis; D-alanine from L-alanine: step 1/1. Catalyzes the interconversion of L-alanine and D-alanine. May also act on other amino acids. The polypeptide is Alanine racemase (alr) (Streptococcus gordonii (strain Challis / ATCC 35105 / BCRC 15272 / CH1 / DL1 / V288)).